The chain runs to 502 residues: Protein DETOXIFICATION 55 (502 aa).

A run of 12 helical transmembrane segments spans residues I30 to T50, L61 to L81, I112 to L132, V145 to P165, V185 to V205, G207 to I227, V261 to Y283, V298 to T318, A344 to V364, V378 to C398, I419 to W439, and C447 to N467.

The protein belongs to the multi antimicrobial extrusion (MATE) (TC 2.A.66.1) family.

The protein localises to the membrane. The sequence is that of Protein DETOXIFICATION 55 from Arabidopsis thaliana (Mouse-ear cress).